A 200-amino-acid chain; its full sequence is NADH-quinone oxidoreductase subunit C 1 (200 aa).

It belongs to the complex I 30 kDa subunit family. NDH-1 is composed of 14 different subunits. Subunits NuoB, C, D, E, F, and G constitute the peripheral sector of the complex.

The protein localises to the cell inner membrane. The enzyme catalyses a quinone + NADH + 5 H(+)(in) = a quinol + NAD(+) + 4 H(+)(out). Functionally, NDH-1 shuttles electrons from NADH, via FMN and iron-sulfur (Fe-S) centers, to quinones in the respiratory chain. The immediate electron acceptor for the enzyme in this species is believed to be ubiquinone. Couples the redox reaction to proton translocation (for every two electrons transferred, four hydrogen ions are translocated across the cytoplasmic membrane), and thus conserves the redox energy in a proton gradient. The protein is NADH-quinone oxidoreductase subunit C 1 of Rhizobium etli (strain CIAT 652).